A 93-amino-acid chain; its full sequence is UPF0223 protein gbs1030 (93 aa).

The protein belongs to the UPF0223 family.

The protein is UPF0223 protein gbs1030 of Streptococcus agalactiae serotype III (strain NEM316).